We begin with the raw amino-acid sequence, 224 residues long: Small ribosomal subunit protein uS7 (224 aa).

This sequence belongs to the universal ribosomal protein uS7 family. In terms of assembly, part of the 30S ribosomal subunit.

Its function is as follows. One of the primary rRNA binding proteins, it binds directly to 16S rRNA where it nucleates assembly of the head domain of the 30S subunit. Is located at the subunit interface close to the decoding center. This is Small ribosomal subunit protein uS7 from Caldivirga maquilingensis (strain ATCC 700844 / DSM 13496 / JCM 10307 / IC-167).